Here is a 108-residue protein sequence, read N- to C-terminus: UPF0060 membrane protein DSY4629 (108 aa).

The next 4 membrane-spanning stretches (helical) occupy residues 5-25, 31-51, 60-80, and 86-106; these read IILF…VWLW, PFWY…IPTL, VYAA…WGID, and NYDW…LWAP.

This sequence belongs to the UPF0060 family.

The protein localises to the cell membrane. This Desulfitobacterium hafniense (strain Y51) protein is UPF0060 membrane protein DSY4629.